Consider the following 253-residue polypeptide: 3-deoxy-manno-octulosonate cytidylyltransferase (253 aa).

This sequence belongs to the KdsB family.

The protein localises to the cytoplasm. It catalyses the reaction 3-deoxy-alpha-D-manno-oct-2-ulosonate + CTP = CMP-3-deoxy-beta-D-manno-octulosonate + diphosphate. The protein operates within nucleotide-sugar biosynthesis; CMP-3-deoxy-D-manno-octulosonate biosynthesis; CMP-3-deoxy-D-manno-octulosonate from 3-deoxy-D-manno-octulosonate and CTP: step 1/1. Its pathway is bacterial outer membrane biogenesis; lipopolysaccharide biosynthesis. Functionally, activates KDO (a required 8-carbon sugar) for incorporation into bacterial lipopolysaccharide in Gram-negative bacteria. The sequence is that of 3-deoxy-manno-octulosonate cytidylyltransferase from Neisseria meningitidis serogroup A / serotype 4A (strain DSM 15465 / Z2491).